The primary structure comprises 213 residues: Kynurenine formamidase (213 aa).

Trp-18 is a substrate binding site. Zn(2+)-binding residues include His-48, His-52, and Asp-54. His-58 (proton donor/acceptor) is an active-site residue. Zn(2+) contacts are provided by His-160 and Glu-172.

Belongs to the Cyclase 1 superfamily. KynB family. Homodimer. Requires Zn(2+) as cofactor.

The catalysed reaction is N-formyl-L-kynurenine + H2O = L-kynurenine + formate + H(+). It functions in the pathway amino-acid degradation; L-tryptophan degradation via kynurenine pathway; L-kynurenine from L-tryptophan: step 2/2. Catalyzes the hydrolysis of N-formyl-L-kynurenine to L-kynurenine, the second step in the kynurenine pathway of tryptophan degradation. This Burkholderia mallei (strain NCTC 10247) protein is Kynurenine formamidase.